A 1523-amino-acid polypeptide reads, in one-letter code: uncharacterized protein (1523 aa).

Positions 1–89 are disordered; it reads MLPTSSNNEE…GSSNMNPYDR (89 aa). An ATP-binding site is contributed by 993–1000; sequence SPFGCGKS. Composition is skewed to polar residues over residues 1463–1476 and 1485–1498; these read TSRQ…NEYN and QSNN…SVTN. The tract at residues 1463–1498 is disordered; sequence TSRQSKQQRANEYNSQHKHVKRQSNNDYGSQRSVTN.

Belongs to the DNA2/NAM7 helicase family.

This is an uncharacterized protein from Caenorhabditis elegans.